A 245-amino-acid polypeptide reads, in one-letter code: Carboxymethylenebutenolidase homolog (245 aa).

Ala-2 is modified (N-acetylalanine). The residue at position 36 (Lys-36) is an N6-acetyllysine. Active-site residues include Cys-132, Asp-179, and His-212. The residue at position 223 (Ser-223) is a Phosphoserine.

The protein belongs to the dienelactone hydrolase family.

The protein resides in the cytoplasm. The protein localises to the cytosol. Its function is as follows. Cysteine hydrolase. The polypeptide is Carboxymethylenebutenolidase homolog (CMBL) (Pongo abelii (Sumatran orangutan)).